The sequence spans 378 residues: Quinolinate synthase (378 aa).

Iminosuccinate contacts are provided by histidine 59 and serine 80. Cysteine 125 provides a ligand contact to [4Fe-4S] cluster. Residues 151–153 and serine 168 contribute to the iminosuccinate site; that span reads YAN. Cysteine 212 lines the [4Fe-4S] cluster pocket. Iminosuccinate is bound by residues 238 to 240 and threonine 255; that span reads HPE. Residue cysteine 309 participates in [4Fe-4S] cluster binding.

The protein belongs to the quinolinate synthase family. Type 1 subfamily. [4Fe-4S] cluster serves as cofactor.

It localises to the cytoplasm. It carries out the reaction iminosuccinate + dihydroxyacetone phosphate = quinolinate + phosphate + 2 H2O + H(+). It functions in the pathway cofactor biosynthesis; NAD(+) biosynthesis; quinolinate from iminoaspartate: step 1/1. Functionally, catalyzes the condensation of iminoaspartate with dihydroxyacetone phosphate to form quinolinate. This chain is Quinolinate synthase, found in Burkholderia mallei (strain NCTC 10247).